Reading from the N-terminus, the 357-residue chain is UDP-N-acetylglucosamine--N-acetylmuramyl-(pentapeptide) pyrophosphoryl-undecaprenol N-acetylglucosamine transferase (357 aa).

UDP-N-acetyl-alpha-D-glucosamine contacts are provided by residues 7–9, Asn-119, Arg-159, Ser-187, Ile-241, and Gln-286; that span reads TGG.

This sequence belongs to the glycosyltransferase 28 family. MurG subfamily.

The protein localises to the cell inner membrane. The enzyme catalyses di-trans,octa-cis-undecaprenyl diphospho-N-acetyl-alpha-D-muramoyl-L-alanyl-D-glutamyl-meso-2,6-diaminopimeloyl-D-alanyl-D-alanine + UDP-N-acetyl-alpha-D-glucosamine = di-trans,octa-cis-undecaprenyl diphospho-[N-acetyl-alpha-D-glucosaminyl-(1-&gt;4)]-N-acetyl-alpha-D-muramoyl-L-alanyl-D-glutamyl-meso-2,6-diaminopimeloyl-D-alanyl-D-alanine + UDP + H(+). Its pathway is cell wall biogenesis; peptidoglycan biosynthesis. Functionally, cell wall formation. Catalyzes the transfer of a GlcNAc subunit on undecaprenyl-pyrophosphoryl-MurNAc-pentapeptide (lipid intermediate I) to form undecaprenyl-pyrophosphoryl-MurNAc-(pentapeptide)GlcNAc (lipid intermediate II). The protein is UDP-N-acetylglucosamine--N-acetylmuramyl-(pentapeptide) pyrophosphoryl-undecaprenol N-acetylglucosamine transferase of Nitrosomonas europaea (strain ATCC 19718 / CIP 103999 / KCTC 2705 / NBRC 14298).